The sequence spans 37 residues: Cytochrome b6-f complex subunit 5 (37 aa).

The helical transmembrane segment at 5 to 25 threads the bilayer; the sequence is LLSGIVLGLIPITLAGLFVTA.

The protein belongs to the PetG family. As to quaternary structure, the 4 large subunits of the cytochrome b6-f complex are cytochrome b6, subunit IV (17 kDa polypeptide, PetD), cytochrome f and the Rieske protein, while the 4 small subunits are PetG, PetL, PetM and PetN. The complex functions as a dimer.

Its subcellular location is the plastid. It is found in the chloroplast thylakoid membrane. Its function is as follows. Component of the cytochrome b6-f complex, which mediates electron transfer between photosystem II (PSII) and photosystem I (PSI), cyclic electron flow around PSI, and state transitions. PetG is required for either the stability or assembly of the cytochrome b6-f complex. This is Cytochrome b6-f complex subunit 5 from Chara vulgaris (Common stonewort).